We begin with the raw amino-acid sequence, 635 residues long: Threonine--tRNA ligase (635 aa).

Residues M1–T62 enclose the TGS domain. Residues D244–P535 are catalytic. Residues C335, H386, and H512 each contribute to the Zn(2+) site.

Belongs to the class-II aminoacyl-tRNA synthetase family. As to quaternary structure, homodimer. The cofactor is Zn(2+).

It localises to the cytoplasm. The catalysed reaction is tRNA(Thr) + L-threonine + ATP = L-threonyl-tRNA(Thr) + AMP + diphosphate + H(+). Its function is as follows. Catalyzes the attachment of threonine to tRNA(Thr) in a two-step reaction: L-threonine is first activated by ATP to form Thr-AMP and then transferred to the acceptor end of tRNA(Thr). Also edits incorrectly charged L-seryl-tRNA(Thr). The polypeptide is Threonine--tRNA ligase (Xylella fastidiosa (strain M23)).